Here is a 204-residue protein sequence, read N- to C-terminus: Ribonuclease HII (204 aa).

The region spanning 1–197 (MTLGIDEAGR…KNRILNPKLL (197 aa)) is the RNase H type-2 domain. 3 residues coordinate a divalent metal cation: Asp6, Glu7, and Asp103.

This sequence belongs to the RNase HII family. It depends on Mn(2+) as a cofactor. Mg(2+) is required as a cofactor.

It localises to the cytoplasm. The catalysed reaction is Endonucleolytic cleavage to 5'-phosphomonoester.. Functionally, endonuclease that specifically degrades the RNA of RNA-DNA hybrids. This chain is Ribonuclease HII, found in Helicobacter pylori (strain HPAG1).